The primary structure comprises 201 residues: dITP/XTP pyrophosphatase (201 aa).

9 to 14 (SNNAGK) is a substrate binding site. Glu41 and Asp70 together coordinate Mg(2+). Asp70 (proton acceptor) is an active-site residue. Substrate is bound by residues Ser71, 155–158 (FGYD), Lys178, and 183–184 (HR).

It belongs to the HAM1 NTPase family. In terms of assembly, homodimer. Mg(2+) is required as a cofactor.

It catalyses the reaction XTP + H2O = XMP + diphosphate + H(+). The catalysed reaction is dITP + H2O = dIMP + diphosphate + H(+). It carries out the reaction ITP + H2O = IMP + diphosphate + H(+). Pyrophosphatase that catalyzes the hydrolysis of nucleoside triphosphates to their monophosphate derivatives, with a high preference for the non-canonical purine nucleotides XTP (xanthosine triphosphate), dITP (deoxyinosine triphosphate) and ITP. Seems to function as a house-cleaning enzyme that removes non-canonical purine nucleotides from the nucleotide pool, thus preventing their incorporation into DNA/RNA and avoiding chromosomal lesions. The protein is dITP/XTP pyrophosphatase of Methylococcus capsulatus (strain ATCC 33009 / NCIMB 11132 / Bath).